Reading from the N-terminus, the 302-residue chain is Probable E3 ubiquitin-protein ligase RZFP34 (302 aa).

The CHY-type zinc finger occupies 54-130 (EGIMQYGCAH…VRQVCISCGV (77 aa)). Residues Cys61, His63, Cys74, Cys75, Cys81, Cys84, His85, His100, Cys112, Cys115, Cys125, Cys128, Cys137, Cys140, His153, Cys154, Cys157, Cys160, His170, Cys171, Cys174, Cys177, His186, and Cys188 each coordinate Zn(2+). The segment at 132–196 (MGKYFCEVCK…ACVEGAMHHD (65 aa)) adopts a CTCHY-type zinc-finger fold. The RING-type; atypical zinc-finger motif lies at 197–240 (CPICFEYLFESTNDVSVLPCGHTIHVKCLREMEEHCQFACPLCS).

Its subcellular location is the nucleus. The catalysed reaction is S-ubiquitinyl-[E2 ubiquitin-conjugating enzyme]-L-cysteine + [acceptor protein]-L-lysine = [E2 ubiquitin-conjugating enzyme]-L-cysteine + N(6)-ubiquitinyl-[acceptor protein]-L-lysine.. Its pathway is protein modification; protein ubiquitination. In terms of biological role, possesses transactivation activity in yeast cells. Involved in the regulation of stomatal aperture. May modulate the expression of genes that control stomata opening during heat shock or drought stress. The chain is Probable E3 ubiquitin-protein ligase RZFP34 from Oryza sativa subsp. japonica (Rice).